Here is a 204-residue protein sequence, read N- to C-terminus: General stress protein Ctc (204 aa).

The interval Ile-177–Gln-204 is disordered. A compositionally biased stretch (acidic residues) spans Ala-186–Gln-204.

The protein belongs to the bacterial ribosomal protein bL25 family. CTC subfamily. As to quaternary structure, part of the ribosome (presumably the 50S subunit) under heat-stress but not control growth conditions. Binds 5S rRNA.

Its function is as follows. Not required for exponential growth; probably functions in vegetatively growing cells, maybe required for accurate translation under stress conditions. The polypeptide is General stress protein Ctc (Bacillus subtilis (strain 168)).